A 1996-amino-acid polypeptide reads, in one-letter code: Protein Shroom3 (1996 aa).

Positions 25–110 (YIYLEAFLEG…TLRLVVRRDV (86 aa)) constitute a PDZ domain. Positions 150-173 (KHRRSEPAGRPHSWHTTKSGEKQP) are disordered. Position 213 is a phosphoserine (Ser-213). Disordered stretches follow at residues 340–389 (NGQG…PARS), 437–468 (EKSPENSPPVKPKHNYTQKAQPGQPLLPTSIY), 568–629 (DASL…WEGD), 673–772 (RRHS…LQGF), and 788–1053 (FEQR…PESS). A phosphoserine mark is found at Ser-439 and Ser-443. Over residues 700-718 (KAEDPGRKAAPDLGSHLDR) the composition is skewed to basic and acidic residues. Residues 750-768 (HPHTSSLGRRGPGPGSASA) show a composition bias toward low complexity. Residues 814-823 (TVSTSSTSGN) show a composition bias toward polar residues. At Ser-816 the chain carries Phosphoserine. Composition is skewed to basic and acidic residues over residues 826–836 (EETKAHIRFSE) and 846–859 (QHFKNGELKLEEAS). Polar residues-rich tracts occupy residues 862–871 (PCGQQLSGGA) and 887–896 (RSQSTFQLSS). A Phosphoserine modification is found at Ser-890. A compositionally biased stretch (basic and acidic residues) spans 897 to 909 (EPEREPEWRDRPG). A phosphoserine mark is found at Ser-910 and Ser-913. Positions 928–1030 (IKDAQSRVLG…SEPEKMNEVG (103 aa)) constitute an ASD1 domain. Low complexity predominate over residues 950–964 (APVASRSWRPRPSSA). Ser-970 is modified (phosphoserine). Residues 1011–1027 (LTPEQKKRSYSEPEKMN) are compositionally biased toward basic and acidic residues. Phosphoserine occurs at positions 1069 and 1072. Disordered regions lie at residues 1093-1115 (KTGKRPTSAAGCSLQEPGPLRER), 1137-1223 (SSLS…MSAE), 1315-1573 (ECPG…SFNK), and 1627-1665 (SLGGQPAPIQTQSLSHDPVSGTQGLEKKVSPDPQKSSED). Residues 1137–1148 (SSLSSLREPSLQ) show a composition bias toward low complexity. Position 1221 is a phosphoserine (Ser-1221). The segment covering 1366 to 1375 (YCSQDGQTGR) has biased composition (polar residues). Residues 1403-1417 (CEGDGPEHGVEEGTR) are compositionally biased toward basic and acidic residues. Phosphoserine is present on Ser-1441. Residues 1459-1472 (KQQSLPSLCSTSDP) are compositionally biased toward polar residues. The segment covering 1498–1515 (PPPHEDYEDEVFVRDPHP) has biased composition (basic and acidic residues). Positions 1524–1536 (EPLPPPPPPPPSQ) are enriched in pro residues. Residues 1634-1649 (PIQTQSLSHDPVSGTQ) show a composition bias toward polar residues. Over residues 1651–1665 (LEKKVSPDPQKSSED) the composition is skewed to basic and acidic residues. One can recognise an ASD2 domain in the interval 1669-1957 (EALAKEIVHQ…QVKCLLESLP (289 aa)).

It belongs to the shroom family. Interacts with F-actin. Interacts with ROCK1.

Its subcellular location is the cell junction. It is found in the adherens junction. The protein resides in the cytoplasm. It localises to the cytoskeleton. The protein localises to the apical cell membrane. In terms of biological role, controls cell shape changes in the neuroepithelium during neural tube closure. Induces apical constriction in epithelial cells by promoting the apical accumulation of F-actin and myosin II, and probably by bundling stress fibers. Induces apicobasal cell elongation by redistributing gamma-tubulin and directing the assembly of robust apicobasal microtubule arrays. In Homo sapiens (Human), this protein is Protein Shroom3 (SHROOM3).